Here is a 622-residue protein sequence, read N- to C-terminus: Pyranose 2-oxidase (622 aa).

The N-terminal stretch at 1–28 (MSASSSDPFHSFAKTSFTSKAAKRATAH) is a signal peptide. Residues 29–37 (SLPPLPGPG) constitute a propeptide that is removed on maturation. His-167 is modified (tele-8alpha-FAD histidine). Substrate contacts are provided by Gln-449 and His-451. His-546 serves as the catalytic Proton acceptor. Residue Asn-591 is part of the active site.

This sequence belongs to the GMC oxidoreductase family. As to quaternary structure, homotetramer. Requires FAD as cofactor.

The protein localises to the periplasm. The catalysed reaction is D-glucose + O2 = 2-dehydro-D-glucose + H2O2. Its function is as follows. Catalyzes the oxidation of various aldopyranoses and disaccharides on carbon-2 to the corresponding 2-keto sugars concomitant with the reduction of O(2) to H(2)O(2). Plays an important role in lignin degradation of wood rot fungi by supplying the essential cosubstrate H(2)O(2) for the ligninolytic peroxidases, lignin peroxidase and manganese-dependent peroxidase. The preferred substrate is D-glucose which is converted to 2-dehydro-D-glucose, an intermediate of a secondary metabolic pathway leading to the antibiotic cortalcerone. Also acts on D-xylose, together with D-glucose the major sugars derived from wood, on L-sorbose, D-galactose and 1,5-anhydroglucitol, a diagnostic marker of diabetes mellitus. In Trametes hirsuta (White-rot fungus), this protein is Pyranose 2-oxidase (P2OX).